The primary structure comprises 353 residues: uncharacterized protein (353 aa).

A signal peptide spans 1–20; it reads MLMRSVCFILLAVLLFSLSA. Cysteine 21 carries N-palmitoyl cysteine lipidation. Cysteine 21 carries the S-diacylglycerol cysteine lipid modification.

Its subcellular location is the cell membrane. This is an uncharacterized protein from Bacillus subtilis (strain 168).